A 343-amino-acid chain; its full sequence is Leucine-rich repeat-containing protein 23 (343 aa).

Residues 1–30 are compositionally biased toward acidic residues; that stretch reads MSDEDDLEDSEPDQDDSEKEEDEKETEEGE. Positions 1–47 are disordered; that stretch reads MSDEDDLEDSEPDQDDSEKEEDEKETEEGEDYRKEGEEFPEEWLPTP. LRR repeat units lie at residues 92-113, 114-134, 135-155, 156-177, 180-200, 201-222, 223-244, and 246-267; these read HLRY…NYLT, HLLW…NELP, YLQI…ISHP, RLET…DPEK, SLHT…INLP, KLKN…EDLS, NLTT…SREM, and SLQY…AKLR. Residues 208-343 are interaction with RSPH9; that stretch reads AQNMLKKVEG…RDLEPEQSLI (136 aa). The region spanning 280–318 is the LRRCT domain; sequence NPCTDETSYRQEALVQMPYLERLDKEFYEEEERAEADVI. A coiled-coil region spans residues 307–329; it reads YEEEERAEADVIRQRLKEEKEQE. Residues 318-337 are compositionally biased toward basic and acidic residues; sequence IRQRLKEEKEQEPEPQRDLE. Positions 318-343 are disordered; sequence IRQRLKEEKEQEPEPQRDLEPEQSLI.

Component of the axonemal radial spoke complex. Interacts with RSPH3. Interacts with RSPH9. Expressed in spermatozoa.

The protein localises to the cell projection. It is found in the cilium. It localises to the flagellum. The protein resides in the cytoplasm. Its subcellular location is the cytoskeleton. The protein localises to the flagellum axoneme. Essential for sperm motility and male fertility. Plays an important role in the proper assembly of the third radial spoke (RS3) head and the bridge structure between RS2 and RS3 in the sperm flagella. The polypeptide is Leucine-rich repeat-containing protein 23 (LRRC23) (Homo sapiens (Human)).